Consider the following 221-residue polypeptide: Large ribosomal subunit protein uL3 (221 aa).

The disordered stretch occupies residues 131–165 (HNQSRGPETHGSRHHRRPGSMGPIKGKIKGKKLPG).

Belongs to the universal ribosomal protein uL3 family. In terms of assembly, part of the 50S ribosomal subunit. Forms a cluster with proteins L14 and L19.

Its function is as follows. One of the primary rRNA binding proteins, it binds directly near the 3'-end of the 23S rRNA, where it nucleates assembly of the 50S subunit. The polypeptide is Large ribosomal subunit protein uL3 (Phytoplasma australiense).